We begin with the raw amino-acid sequence, 182 residues long: Adenine phosphoribosyltransferase (182 aa).

This sequence belongs to the purine/pyrimidine phosphoribosyltransferase family. As to quaternary structure, homodimer.

Its subcellular location is the cytoplasm. The enzyme catalyses AMP + diphosphate = 5-phospho-alpha-D-ribose 1-diphosphate + adenine. The protein operates within purine metabolism; AMP biosynthesis via salvage pathway; AMP from adenine: step 1/1. Functionally, catalyzes a salvage reaction resulting in the formation of AMP, that is energically less costly than de novo synthesis. This Stutzerimonas stutzeri (strain A1501) (Pseudomonas stutzeri) protein is Adenine phosphoribosyltransferase.